We begin with the raw amino-acid sequence, 116 residues long: Vesicle-associated membrane protein 2 (116 aa).

The disordered stretch occupies residues 1 to 33; the sequence is MSATAATAPPAAPAGEGGPPAPPPNLTSNRRLQ. S2 carries the N-acetylserine modification. Topologically, residues 2–94 are cytoplasmic; the sequence is SATAATAPPA…KRKYWWKNLK (93 aa). One can recognise a v-SNARE coiled-coil homology domain in the interval 31 to 91; the sequence is RLQQTQAQVD…AKLKRKYWWK (61 aa). The interval 92 to 116 is required for interaction with SEPT8; sequence NLKMMIILGVICAIILIIIIVYFSS. The chain crosses the membrane as a helical; Anchor for type IV membrane protein span at residues 95-114; the sequence is MMIILGVICAIILIIIIVYF. At 115–116 the chain is on the vesicular side; the sequence is SS.

This sequence belongs to the synaptobrevin family. Part of the SNARE core complex containing SNAP25, VAMP2 and STX1A; this complex constitutes the basic catalytic machinery of the complex neurotransmitter release apparatus. Recruited to the SNARE complex following binding of the SNARE complex component STX1A to STXBP1. This complex binds to CPLX1. Interacts with POPDC1 and STX4. Interacts with VAPA and VAPB. Interacts with WDFY2, PRKCZ and PRKCI. Forms a complex with WDFY2 and PRKCZ. Interacts (via N-terminus) with KCNB1 (via N-terminus and C-terminus); stimulates the channel inactivation rate of KCNB1. Interacts with SEPT8; the interaction inhibits interaction of VAMP2 with SYP. Interacts with SYP; the interaction is inhibited by interaction with SEPT8. Interacts with PICALM. Interacts with alpha-synuclein/SNCA. Interacts with STX3. In terms of processing, phosphorylated by PRKCZ in vitro and this phosphorylation is increased in the presence of WDFY2.

The protein localises to the cytoplasmic vesicle. The protein resides in the secretory vesicle. It is found in the synaptic vesicle membrane. It localises to the cell membrane. Its function is as follows. Involved in the targeting and/or fusion of transport vesicles to their target membrane. Major SNARE protein of synaptic vesicles which mediates fusion of synaptic vesicles to release neurotransmitters. Essential for fast vesicular exocytosis and activity-dependent neurotransmitter release as well as fast endocytosis that mediates rapid reuse of synaptic vesicles. Modulates the gating characteristics of the delayed rectifier voltage-dependent potassium channel KCNB1. In Bos taurus (Bovine), this protein is Vesicle-associated membrane protein 2 (VAMP2).